The following is a 603-amino-acid chain: Elongation factor 4 (603 aa).

Residues Asp-7–Lys-191 form the tr-type G domain. GTP contacts are provided by residues Asp-19–Thr-24 and Asn-138–Asp-141.

It belongs to the TRAFAC class translation factor GTPase superfamily. Classic translation factor GTPase family. LepA subfamily.

The protein resides in the cell inner membrane. The catalysed reaction is GTP + H2O = GDP + phosphate + H(+). Its function is as follows. Required for accurate and efficient protein synthesis under certain stress conditions. May act as a fidelity factor of the translation reaction, by catalyzing a one-codon backward translocation of tRNAs on improperly translocated ribosomes. Back-translocation proceeds from a post-translocation (POST) complex to a pre-translocation (PRE) complex, thus giving elongation factor G a second chance to translocate the tRNAs correctly. Binds to ribosomes in a GTP-dependent manner. The protein is Elongation factor 4 of Rhodopseudomonas palustris (strain ATCC BAA-98 / CGA009).